Consider the following 356-residue polypeptide: DNA polymerase IV (356 aa).

The UmuC domain occupies 6-187 (IIHIDMDYFF…LDIGDFPGVG (182 aa)). Positions 10 and 105 each coordinate Mg(2+). Residue E106 is part of the active site.

The protein belongs to the DNA polymerase type-Y family. Monomer. The cofactor is Mg(2+).

The protein localises to the cytoplasm. It carries out the reaction DNA(n) + a 2'-deoxyribonucleoside 5'-triphosphate = DNA(n+1) + diphosphate. In terms of biological role, poorly processive, error-prone DNA polymerase involved in untargeted mutagenesis. Copies undamaged DNA at stalled replication forks, which arise in vivo from mismatched or misaligned primer ends. These misaligned primers can be extended by PolIV. Exhibits no 3'-5' exonuclease (proofreading) activity. May be involved in translesional synthesis, in conjunction with the beta clamp from PolIII. This chain is DNA polymerase IV, found in Staphylococcus aureus (strain MRSA252).